Reading from the N-terminus, the 802-residue chain is Leucine--tRNA ligase (802 aa).

A 'HIGH' region motif is present at residues 40–51 (PYPSGAGLHVGH). The short motif at 576 to 580 (KMSKS) is the 'KMSKS' region element. Lysine 579 provides a ligand contact to ATP.

The protein belongs to the class-I aminoacyl-tRNA synthetase family.

The protein resides in the cytoplasm. It catalyses the reaction tRNA(Leu) + L-leucine + ATP = L-leucyl-tRNA(Leu) + AMP + diphosphate. This Bacillus anthracis (strain A0248) protein is Leucine--tRNA ligase.